The following is a 394-amino-acid chain: MDKQHSKQRIVVGLSGGVDSAVTAYLLKQQGHEVIGIFMKNWEDDDDSEFCSSNIDFVDAAAVADVIGIEIEHVNFAANYKDRVFAEFLREYQAGRTPNPDILCNAEIKFKAFLDHAMRLGAEKIATGHYARVRQNEATGLHELLKGLDPSKDQSYFLHRLNQAQLSKTLFPVGELHKTEVRRIADEIGLPNARKKDSTGICFIGERPFRDFLNRYIAKAPGPVKNDQGRILGEHVGLSFYTLGQRQGLGIGGVKARGADLKAAQARGQRGVGEHEPWFVARKDMDSNTLWVVQGHDHPWLQSTLLNAQDCSWVAGSAPALGAMAAKTRYRQADAACELVSATAGGCELAFLDAQWAVTPGQSAVLYQGEVCLGGGVIASSNVQNLPGGKPAVA.

ATP is bound by residues 13–20 and methionine 39; that span reads GLSGGVDS. The interaction with target base in tRNA stretch occupies residues 99–101; sequence NPD. Cysteine 104 serves as the catalytic Nucleophile. The cysteines at positions 104 and 202 are disulfide-linked. An ATP-binding site is contributed by glycine 128. The tract at residues 152–154 is interaction with tRNA; sequence KDQ. Cysteine 202 functions as the Cysteine persulfide intermediate in the catalytic mechanism. The interval 329–330 is interaction with tRNA; the sequence is RY.

The protein belongs to the MnmA/TRMU family.

Its subcellular location is the cytoplasm. The catalysed reaction is S-sulfanyl-L-cysteinyl-[protein] + uridine(34) in tRNA + AH2 + ATP = 2-thiouridine(34) in tRNA + L-cysteinyl-[protein] + A + AMP + diphosphate + H(+). In terms of biological role, catalyzes the 2-thiolation of uridine at the wobble position (U34) of tRNA, leading to the formation of s(2)U34. The chain is tRNA-specific 2-thiouridylase MnmA from Polaromonas naphthalenivorans (strain CJ2).